The following is a 186-amino-acid chain: Inner membrane-spanning protein YciB (186 aa).

5 helical membrane-spanning segments follow: residues 10–30, 47–67, 76–96, 121–141, and 149–169; these read IILFFAAFKVWGIYVATAVAI, VEPLQWLSLGVIVLFGGATLL, WKPTVLYWLMGGTLLVGQLVF, WGWTGFFATMGVLNLWVAYNF, and FKLFGGIGLMFAFVIAQALYL.

It belongs to the YciB family.

It localises to the cell inner membrane. Its function is as follows. Plays a role in cell envelope biogenesis, maintenance of cell envelope integrity and membrane homeostasis. The sequence is that of Inner membrane-spanning protein YciB from Acidovorax sp. (strain JS42).